Reading from the N-terminus, the 451-residue chain is Spermidine sinapoyl-CoA acyltransferase (451 aa).

Spermidine contacts are provided by tyrosine 47, histidine 169, serine 294, aspartate 316, and leucine 378. Histidine 169 (proton acceptor) is an active-site residue. Aspartate 391 (proton acceptor) is an active-site residue.

This sequence belongs to the plant acyltransferase family. Monomer. As to expression, predominantly expressed in siliques, especially in seeds around the embryo, and, at low levels, in flowers. Barely detectable in stems, leaves, and roots.

The catalysed reaction is 2 (E)-sinapoyl-CoA + spermidine = N(1),N(8)-bis[(E)-sinapoyl]-spermidine + 2 CoA + 2 H(+). The protein operates within amine and polyamine metabolism; spermidine metabolism. Spermidine sinapoyl-CoA acyltransferase that mediates the accumulation of disinapoyl spermidine conjugates in seeds. Catalyzes the two conjugating steps required for the biosynthesis of N1,N8-disipanoyl-spermidine. Can also use putrescine as an acyl acceptor to convert it into monosinapoyl-putrescine. In Arabidopsis thaliana (Mouse-ear cress), this protein is Spermidine sinapoyl-CoA acyltransferase.